Reading from the N-terminus, the 314-residue chain is Epithelial-stromal interaction protein 1 (314 aa).

Disordered stretches follow at residues 1–72 (MYTR…PNES), 227–272 (WAGS…RAQI), and 289–314 (QGKSQPGGLEQSGGCCNMNSTDSWGL). Residues 18-30 (SRDHAGAGQRREL) are compositionally biased toward basic and acidic residues. Position 39 is a phosphoserine (serine 39). Residues 71 to 180 (ESRRQKIQRI…QEDIRRATFR (110 aa)) adopt a coiled-coil conformation. Over residues 232–272 (AHRDSPQKEDNPRLQKTRDGHQKNKLLETKGQHQEEERAQI) the composition is skewed to basic and acidic residues. Positions 305–314 (NMNSTDSWGL) are enriched in polar residues.

In terms of tissue distribution, expressed in the spleen, with expression in T cells, B cells, natural killer cells and natural killer T cells and high expression in monocytes and macrophages.

Functionally, plays a role in M1 macrophage polarization and is required for the proper regulation of gene expression during M1 versus M2 macrophage differentiation. Might play a role in RELA/p65 and STAT1 phosphorylation and nuclear localization upon activation of macrophages. In Mus musculus (Mouse), this protein is Epithelial-stromal interaction protein 1 (Epsti1).